Reading from the N-terminus, the 266-residue chain is MADYTNYTNKEMQAVTIAKQIKNGQVVTVGTGLPLIGASVAKRVYAPDCHIIVESGLMDCSPVEVPRSVGDLRFMAHCGCIWPNVRFVGFEINEYLHKANRLIAFIGGAQIDPYGNVNSTSIGDYHHPKTRFTGSGGANGIATYSNTIIMMQHEKRRFMNKIDYVTSPGWIDGPGGRERLGLPGDVGPQLVVTDKGILKFDEKTKRMYLAAYYPTSSPEDVLENTGFDLDVSKAVELEAPDPAVIKLIREEIDPGQAFIQVPTEAK.

Glu54 is a catalytic residue.

Belongs to the 3-oxoacid CoA-transferase subunit B family. Heterooctamer of four A and four B subunits.

The protein localises to the cytoplasm. The catalysed reaction is trans-glutaconate + acetyl-CoA = (2E)-glutaconyl-CoA + acetate. It participates in amino-acid degradation; L-glutamate degradation via hydroxyglutarate pathway; crotonoyl-CoA from L-glutamate: step 3/5. Its function is as follows. Catalyzes the transfer of the CoA moiety from acetyl-CoA to (R)-2-hydroxyglutarate and related compounds like glutaconate. This chain is Glutaconate CoA-transferase subunit B (gctB), found in Acidaminococcus fermentans (strain ATCC 25085 / DSM 20731 / CCUG 9996 / CIP 106432 / VR4).